The primary structure comprises 208 residues: MRKRLMAMLQNDISLQQQENALAKQSAKFHSKIAAKHQLIKRQQRKLEKLNQVANERKEDQENRSAFEQSMRDKLLREQQNLSEMQTELATKKQRRDELMGFVRTMSEATNTYINLKALPARVKGVALRPEQGEWIPFNCDAYDLKGLNALWSRLNEPSASTDKWQQLFSAEPTAKEKENANASLSSIIEIDLTSPTAHRSLAKMLEK.

Positions 31 to 101 form a coiled coil; that stretch reads SKIAAKHQLI…KKQRRDELMG (71 aa).

This sequence belongs to the SPC25 family. Component of the Ndc80 complex, which is composed of Ndc80, Nuf2 and Spc25.

The protein resides in the nucleus. The protein localises to the chromosome. Its subcellular location is the centromere. It is found in the kinetochore. In terms of biological role, acts as a component of the essential kinetochore-associated Ndc80 complex, which is required for chromosome segregation and spindle checkpoint activity during meiosis and mitosis. Required for kinetochore integrity and the organization of stable microtubule binding sites in the outer plate of the kinetochore. Participates in SAC signaling that responds specifically to disruptions in spindle microtubule dynamics. The NDC80 complex synergistically enhances the affinity of the SKA1 complex for microtubules and may allow the NDC80 complex to track depolymerizing microtubules. The sequence is that of Kinetochore protein Spc25 from Drosophila mojavensis (Fruit fly).